A 96-amino-acid polypeptide reads, in one-letter code: Small ribosomal subunit protein bS20 (96 aa).

The protein belongs to the bacterial ribosomal protein bS20 family.

Binds directly to 16S ribosomal RNA. The polypeptide is Small ribosomal subunit protein bS20 (Anaplasma marginale (strain St. Maries)).